The following is a 136-amino-acid chain: Piercer of microtubule wall 1 protein (136 aa).

The segment covering 1–16 (MSEEDPKACAEPEEPK) has biased composition (basic and acidic residues). The interval 1–27 (MSEEDPKACAEPEEPKAGPPPEKTSDW) is disordered.

The protein belongs to the PIERCE1 family. Microtubule inner protein component of sperm flagellar doublet microtubules. Interacts with CFAP53, ODAD1 and ODAD3; the interactions link the outer dynein arms docking complex (ODA-DC) to the internal microtubule inner proteins (MIP) in cilium axoneme. Expressed in trachea multiciliated cells.

The protein localises to the cytoplasm. It localises to the cytoskeleton. It is found in the cilium axoneme. The protein resides in the flagellum axoneme. In terms of biological role, microtubule inner protein involved in the attachment of outer dynein arms (ODAs) to dynein-decorated doublet microtubules (DMTs) in cilia axoneme, which is required for motile cilia beating. Functions at the initial step of left-right asymmetry specification of the visceral organs. The chain is Piercer of microtubule wall 1 protein (PIERCE1) from Bos taurus (Bovine).